The following is a 258-amino-acid chain: Imidazole glycerol phosphate synthase subunit HisF (258 aa).

Catalysis depends on residues aspartate 12 and aspartate 131.

The protein belongs to the HisA/HisF family. In terms of assembly, heterodimer of HisH and HisF.

Its subcellular location is the cytoplasm. It carries out the reaction 5-[(5-phospho-1-deoxy-D-ribulos-1-ylimino)methylamino]-1-(5-phospho-beta-D-ribosyl)imidazole-4-carboxamide + L-glutamine = D-erythro-1-(imidazol-4-yl)glycerol 3-phosphate + 5-amino-1-(5-phospho-beta-D-ribosyl)imidazole-4-carboxamide + L-glutamate + H(+). The protein operates within amino-acid biosynthesis; L-histidine biosynthesis; L-histidine from 5-phospho-alpha-D-ribose 1-diphosphate: step 5/9. In terms of biological role, IGPS catalyzes the conversion of PRFAR and glutamine to IGP, AICAR and glutamate. The HisF subunit catalyzes the cyclization activity that produces IGP and AICAR from PRFAR using the ammonia provided by the HisH subunit. In Nocardioides sp. (strain ATCC BAA-499 / JS614), this protein is Imidazole glycerol phosphate synthase subunit HisF.